We begin with the raw amino-acid sequence, 553 residues long: Dihydrolipoyllysine-residue acetyltransferase component of pyruvate dehydrogenase complex (553 aa).

Residues 4 to 78 enclose the Lipoyl-binding 1 domain; it reads AIEIKVPDIG…SEGSVLVMLE (75 aa). An N6-lipoyllysine modification is found at Lys-44. Positions 97-118 are disordered; it reads AAAAPAPAPAPAAAPAAAPAAG. Residues 122-196 enclose the Lipoyl-binding 2 domain; it reads TIEVKVPDIG…AEGTLLLILE (75 aa). An N6-lipoyllysine modification is found at Lys-162. The 38-residue stretch at 250-287 folds into the Peripheral subunit-binding (PSBD) domain; sequence HASPSVRKFARELGVDVSRVPGTGPKGRITQEDVQGYV. His-526 is a catalytic residue.

The protein belongs to the 2-oxoacid dehydrogenase family. As to quaternary structure, forms a 24-polypeptide structural core with octahedral symmetry. It depends on (R)-lipoate as a cofactor.

The enzyme catalyses N(6)-[(R)-dihydrolipoyl]-L-lysyl-[protein] + acetyl-CoA = N(6)-[(R)-S(8)-acetyldihydrolipoyl]-L-lysyl-[protein] + CoA. In terms of biological role, the pyruvate dehydrogenase complex catalyzes the overall conversion of pyruvate to acetyl-CoA and CO(2). It contains multiple copies of three enzymatic components: pyruvate dehydrogenase (E1), dihydrolipoamide acetyltransferase (E2) and lipoamide dehydrogenase (E3). This Cupriavidus necator (strain ATCC 17699 / DSM 428 / KCTC 22496 / NCIMB 10442 / H16 / Stanier 337) (Ralstonia eutropha) protein is Dihydrolipoyllysine-residue acetyltransferase component of pyruvate dehydrogenase complex (pdhB).